A 304-amino-acid polypeptide reads, in one-letter code: tRNA pseudouridine synthase B (304 aa).

Residue D38 is the Nucleophile of the active site.

Belongs to the pseudouridine synthase TruB family. Type 1 subfamily.

It catalyses the reaction uridine(55) in tRNA = pseudouridine(55) in tRNA. Functionally, responsible for synthesis of pseudouridine from uracil-55 in the psi GC loop of transfer RNAs. This is tRNA pseudouridine synthase B from Listeria monocytogenes serotype 4b (strain F2365).